We begin with the raw amino-acid sequence, 443 residues long: Histidinol dehydrogenase (443 aa).

3 residues coordinate NAD(+): Y133, Q191, and N214. Substrate is bound by residues S240, Q262, and H265. 2 residues coordinate Zn(2+): Q262 and H265. Catalysis depends on proton acceptor residues E329 and H330. Residues H330, D363, E417, and H422 each coordinate substrate. Residue D363 coordinates Zn(2+). Residue H422 coordinates Zn(2+).

It belongs to the histidinol dehydrogenase family. Homodimer. The cofactor is Zn(2+).

The enzyme catalyses L-histidinol + 2 NAD(+) + H2O = L-histidine + 2 NADH + 3 H(+). It participates in amino-acid biosynthesis; L-histidine biosynthesis; L-histidine from 5-phospho-alpha-D-ribose 1-diphosphate: step 9/9. Catalyzes the sequential NAD-dependent oxidations of L-histidinol to L-histidinaldehyde and then to L-histidine. The sequence is that of Histidinol dehydrogenase from Yersinia pestis.